The chain runs to 473 residues: ATP synthase subunit beta 2 (473 aa).

Residue 158-165 (GGAGVGKT) coordinates ATP.

It belongs to the ATPase alpha/beta chains family. F-type ATPases have 2 components, CF(1) - the catalytic core - and CF(0) - the membrane proton channel. CF(1) has five subunits: alpha(3), beta(3), gamma(1), delta(1), epsilon(1). CF(0) has three main subunits: a(1), b(2) and c(9-12). The alpha and beta chains form an alternating ring which encloses part of the gamma chain. CF(1) is attached to CF(0) by a central stalk formed by the gamma and epsilon chains, while a peripheral stalk is formed by the delta and b chains.

The protein resides in the cell membrane. The catalysed reaction is ATP + H2O + 4 H(+)(in) = ADP + phosphate + 5 H(+)(out). Functionally, produces ATP from ADP in the presence of a proton gradient across the membrane. The catalytic sites are hosted primarily by the beta subunits. The chain is ATP synthase subunit beta 2 from Listeria monocytogenes serotype 4b (strain F2365).